A 193-amino-acid chain; its full sequence is Ion-translocating oxidoreductase complex subunit B (193 aa).

The segment at 1 to 26 (MSTMLIAVILLTLLALFFGVLLGFAA) is hydrophobic. The 59-residue stretch at 32-90 (EGNPIVDELEAILPQTQCGQCGYPGCRPYAEAIANGDKVNKCPPGGTATMEKLASLMGV) folds into the 4Fe-4S domain. Cys49, Cys52, Cys57, Cys73, Cys114, Cys117, Cys120, Cys124, Cys144, Cys147, Cys150, and Cys154 together coordinate [4Fe-4S] cluster. 4Fe-4S ferredoxin-type domains are found at residues 105 to 134 (KVAY…GAGK) and 136 to 164 (MHTV…MVPV).

This sequence belongs to the 4Fe4S bacterial-type ferredoxin family. RnfB subfamily. The complex is composed of six subunits: RnfA, RnfB, RnfC, RnfD, RnfE and RnfG. [4Fe-4S] cluster is required as a cofactor.

The protein localises to the cell inner membrane. In terms of biological role, part of a membrane-bound complex that couples electron transfer with translocation of ions across the membrane. The sequence is that of Ion-translocating oxidoreductase complex subunit B from Shewanella oneidensis (strain ATCC 700550 / JCM 31522 / CIP 106686 / LMG 19005 / NCIMB 14063 / MR-1).